We begin with the raw amino-acid sequence, 347 residues long: MNKKSLNIVVMFGILMILAFSGCVDQNASESTSEDTTPKILKIFHAGSLAVPFGEYESLYEAEYPNVDVQREAAGSVACVRKITELNKTAEILASADYTLIPDMMMPDYADWYVMVAKNEIVIAYTENSQYYDEITTENWYEIFQRGGVKYGFSSPNDDPCGYRTQMVVQLAETAYGDSTIYDDLMLENSNFEVDENADGTYLVRSPASIEVNEEKVFMRSKEVDLLGPLETGAFDYLFIYKSVANQHNLSYIELPAEINLGSYANADDYAKASIILEGQNSTILAKPIVYGMTVPSNAEDYEEGVNFVKTVLENPDVFENAGQPVISPAIAVGNVPDELSDLVTMG.

A signal peptide spans methionine 1 to serine 21.

Belongs to the bacterial solute-binding protein 1 family. WtpA subfamily.

This is an uncharacterized protein from Methanococcus maripaludis (strain C5 / ATCC BAA-1333).